The chain runs to 275 residues: Elongation factor Ts (275 aa).

The interval 76 to 79 (TDFV) is involved in Mg(2+) ion dislocation from EF-Tu.

Belongs to the EF-Ts family.

It localises to the cytoplasm. Associates with the EF-Tu.GDP complex and induces the exchange of GDP to GTP. It remains bound to the aminoacyl-tRNA.EF-Tu.GTP complex up to the GTP hydrolysis stage on the ribosome. The sequence is that of Elongation factor Ts from Rhodococcus erythropolis (strain PR4 / NBRC 100887).